Reading from the N-terminus, the 64-residue chain is Conotoxin reg3k (64 aa).

The first 20 residues, 1–20 (MMFKLGVLLTICLLLFPLTA), serve as a signal peptide directing secretion. The propeptide occupies 21 to 48 (LQLDWDQPGDHMLDISSEIDDRWFDPVR). 3 disulfide bridges follow: C50/C60, C51/C58, and C56/C61. P59 bears the 4-hydroxyproline mark.

Expressed by the venom duct.

The protein localises to the secreted. The polypeptide is Conotoxin reg3k (Conus regius (Crown cone)).